Here is a 463-residue protein sequence, read N- to C-terminus: MSLIVTRFAPSPTGYLHIGGLRTAIFNYLFARANQGKFFLRIEDTDLSRNSIEAANAIIEAFKWVGLEYDGEILYQSKRFEIYKEYIQKLLDEDKAYYCYMSKDELDALREEQKARKETPRYDNRYRDFKGTPPKGIEPVVRIKVPQNEVIGFNDGVKGEVKVNTNELDDFIIARSDGTPTYNFVVIVDDALMGITDVIRGDDHLSNTPKQIVLYKALNFKIPNFFHVPMILNEEGQKLSKRHGATNVMDYQEMGYLKEALVNFLVRLGWSYQDKEIFSMQELLECFDPKDLNSSPSCFSWHKLNWLNAHYLKNQSAQKLLELLKPFSFSDLSHLNPAQLDRLLDALKERSQTLKELALKIDEVLIAPVEYEEKVFKKLNQALIMPLLEKFKLELKEANFNDESALENAMHKIIEEEKIKAGSFMQPLRLALLGKGGGIGLKEALFILGKTESVKRIENFLKN.

Residues 10–20 (PSPTGYLHIGG) carry the 'HIGH' region motif. A 'KMSKS' region motif is present at residues 238–242 (KLSKR). Position 241 (Lys-241) interacts with ATP.

This sequence belongs to the class-I aminoacyl-tRNA synthetase family. Glutamate--tRNA ligase type 1 subfamily. As to quaternary structure, monomer.

Its subcellular location is the cytoplasm. It catalyses the reaction tRNA(Glu) + L-glutamate + ATP = L-glutamyl-tRNA(Glu) + AMP + diphosphate. In terms of biological role, catalyzes the attachment of glutamate to tRNA(Glu) in a two-step reaction: glutamate is first activated by ATP to form Glu-AMP and then transferred to the acceptor end of tRNA(Glu). The sequence is that of Glutamate--tRNA ligase 1 from Helicobacter pylori (strain G27).